The primary structure comprises 193 residues: ATP-dependent Clp protease proteolytic subunit (193 aa).

Ser-98 acts as the Nucleophile in catalysis. His-123 is a catalytic residue.

This sequence belongs to the peptidase S14 family. As to quaternary structure, fourteen ClpP subunits assemble into 2 heptameric rings which stack back to back to give a disk-like structure with a central cavity, resembling the structure of eukaryotic proteasomes.

The protein resides in the cytoplasm. The enzyme catalyses Hydrolysis of proteins to small peptides in the presence of ATP and magnesium. alpha-casein is the usual test substrate. In the absence of ATP, only oligopeptides shorter than five residues are hydrolyzed (such as succinyl-Leu-Tyr-|-NHMec, and Leu-Tyr-Leu-|-Tyr-Trp, in which cleavage of the -Tyr-|-Leu- and -Tyr-|-Trp bonds also occurs).. Cleaves peptides in various proteins in a process that requires ATP hydrolysis. Has a chymotrypsin-like activity. Plays a major role in the degradation of misfolded proteins. In Glaesserella parasuis serovar 5 (strain SH0165) (Haemophilus parasuis), this protein is ATP-dependent Clp protease proteolytic subunit.